The sequence spans 264 residues: Osteopontin (264 aa).

The signal sequence occupies residues 1–16 (MKLAFLCLCFISIAAA). 2 disordered regions span residues 21 to 141 (KSRQ…RGDS) and 166 to 264 (IEDD…EVTR). Residues 31-51 (SEEKYDPRSHHTHRYHQDHVD) are compositionally biased toward basic and acidic residues. Residues 52–73 (SQSQEHLQQTQNDLASLQQTHY) are compositionally biased toward polar residues. Over residues 97–118 (AVDDDDDDDNDSNDTDESDEVV) the composition is skewed to acidic residues. Asn106 and Asn109 each carry an N-linked (GlcNAc...) asparagine glycan. The Cell attachment site signature appears at 132 to 134 (RGD). Basic and acidic residues predominate over residues 186–212 (KESREQDSRELAQHQSVENDSRPRFDS). N-linked (GlcNAc...) asparagine glycans are attached at residues Asn204 and Asn242. Polar residues predominate over residues 233–246 (ASRSAVDTSNQTLE). The segment covering 252 to 264 (EDRHSIENNEVTR) has biased composition (basic and acidic residues).

It belongs to the osteopontin family. Post-translationally, extensively phosphorylated on serine residues.

Its subcellular location is the secreted. Its function is as follows. Major non-collagenous bone protein that binds tightly to hydroxyapatite. Appears to form an integral part of the mineralized matrix. Probably important to cell-matrix interaction. In terms of biological role, acts as a cytokine involved in enhancing production of interferon-gamma and interleukin-12 and reducing production of interleukin-10 and is essential in the pathway that leads to type I immunity. This Gallus gallus (Chicken) protein is Osteopontin (SPP1).